Consider the following 186-residue polypeptide: MSEELLQKFLTSIEQEDGIAEIGKKKKNKSAARRDNVKTILHAASKGQVQLSAEESYIVQKPSTSKGSDYIDDRLASQGFSLIDQARSFKPKDLKKRNLKYMKFQEGRRIDKKKGRILVQAHMQTKQDLKSLRKEKKAIIGVKEPRRLLPGQKKKQKDKSVFSDADFAQVAHVAKRINSMADHSFL.

This is an uncharacterized protein from Caenorhabditis elegans.